A 530-amino-acid chain; its full sequence is [Pyruvate dehydrogenase [acetyl-transferring]]-phosphatase 2, mitochondrial (530 aa).

A mitochondrion-targeting transit peptide spans 1 to 67 (MSSTASYRIF…FALRKAYRHT (67 aa)). Positions 107-518 (VLRFESNQLA…DDITVMVVFF (412 aa)) constitute a PPM-type phosphatase domain. D142, G143, D413, and D509 together coordinate Mn(2+).

Belongs to the PP2C family. The cofactor is Mg(2+). As to expression, highly expressed in liver.

The protein resides in the mitochondrion. The enzyme catalyses O-phospho-L-seryl-[pyruvate dehydrogenase E1 alpha subunit] + H2O = L-seryl-[pyruvate dehydrogenase E1 alpha subunit] + phosphate. With respect to regulation, mg(2+)-dependent protein phosphatase. Phosphatase activity is increased in the presence of spermine, a naturally produced polyamine. Mitochondrial enzyme that catalyzes the dephosphorylation and concomitant reactivation of the alpha subunit of the E1 component of the pyruvate dehydrogenase complex (PDC), thereby stimulating the conversion of pyruvate into acetyl-CoA. Acts as a crucial regulator of T cell metabolism and function, with a particular focus on T-helper Th17. The protein is [Pyruvate dehydrogenase [acetyl-transferring]]-phosphatase 2, mitochondrial (Pdp2) of Rattus norvegicus (Rat).